We begin with the raw amino-acid sequence, 31 residues long: Cytochrome b6-f complex subunit 6 (31 aa).

A helical membrane pass occupies residues 3–23 (LIIGYIILLACAFGLAAGLYF).

This sequence belongs to the PetL family. In terms of assembly, the 4 large subunits of the cytochrome b6-f complex are cytochrome b6, subunit IV (17 kDa polypeptide, PetD), cytochrome f and the Rieske protein, while the 4 small subunits are PetG, PetL, PetM and PetN. The complex functions as a dimer.

Its subcellular location is the plastid. It localises to the chloroplast thylakoid membrane. In terms of biological role, component of the cytochrome b6-f complex, which mediates electron transfer between photosystem II (PSII) and photosystem I (PSI), cyclic electron flow around PSI, and state transitions. PetL is important for photoautotrophic growth as well as for electron transfer efficiency and stability of the cytochrome b6-f complex. The polypeptide is Cytochrome b6-f complex subunit 6 (Guillardia theta (Cryptophyte)).